A 348-amino-acid chain; its full sequence is Dihydroorotase (348 aa).

Zn(2+) contacts are provided by histidine 17 and histidine 19. Substrate-binding positions include 19 to 21 and asparagine 45; that span reads HLR. 3 residues coordinate Zn(2+): lysine 103, histidine 140, and histidine 178. Position 103 is an N6-carboxylysine (lysine 103). Residue histidine 140 participates in substrate binding. Substrate is bound at residue leucine 223. Aspartate 251 contributes to the Zn(2+) binding site. The active site involves aspartate 251. Substrate contacts are provided by histidine 255 and alanine 267.

The protein belongs to the metallo-dependent hydrolases superfamily. DHOase family. Class II DHOase subfamily. Homodimer. Requires Zn(2+) as cofactor.

It carries out the reaction (S)-dihydroorotate + H2O = N-carbamoyl-L-aspartate + H(+). It participates in pyrimidine metabolism; UMP biosynthesis via de novo pathway; (S)-dihydroorotate from bicarbonate: step 3/3. Catalyzes the reversible cyclization of carbamoyl aspartate to dihydroorotate. The polypeptide is Dihydroorotase (Salmonella paratyphi A (strain ATCC 9150 / SARB42)).